Consider the following 198-residue polypeptide: uncharacterized protein (198 aa).

Residues Glu-11 to Arg-71 enclose the HTH tetR-type domain. Residues Thr-34–Trp-53 constitute a DNA-binding region (H-T-H motif).

This is an uncharacterized protein from Bacillus subtilis (strain 168).